We begin with the raw amino-acid sequence, 599 residues long: ATP-dependent zinc metalloprotease FtsH 3 (599 aa).

The Cytoplasmic segment spans residues 1–7 (MKYKKKN). The helical transmembrane segment at 8–28 (ILFITTIIVIYLAFLFNWLEI) threads the bilayer. The Extracellular segment spans residues 29–128 (GIFKPKGESI…PFSWLLSIFS (100 aa)). A helical transmembrane segment spans residues 129–149 (ILLNFINVLSSLVFTIYIFLA). The Cytoplasmic portion of the chain corresponds to 150-599 (IHRESGKLNS…IEQLVVNTKK (450 aa)). Residue 214-221 (GPPGTGKT) participates in ATP binding. Histidine 436 contributes to the Zn(2+) binding site. Residue glutamate 437 is part of the active site. Histidine 440 and aspartate 512 together coordinate Zn(2+).

The protein in the central section; belongs to the AAA ATPase family. It in the C-terminal section; belongs to the peptidase M41 family. In terms of assembly, homohexamer. The cofactor is Zn(2+).

Its subcellular location is the cell membrane. Functionally, acts as a processive, ATP-dependent zinc metallopeptidase for both cytoplasmic and membrane proteins. Plays a role in the quality control of integral membrane proteins. The chain is ATP-dependent zinc metalloprotease FtsH 3 from Phytoplasma mali (strain AT).